A 176-amino-acid polypeptide reads, in one-letter code: Disulfide bond formation protein B (176 aa).

Residues 1-14 (MLRFLNQCSHGRGA) are Cytoplasmic-facing. Residues 15 to 31 (WLLMAFTALALELTALW) traverse the membrane as a helical segment. Over 32 to 49 (FQHVMLLKPCVLCIYERC) the chain is Periplasmic. Cysteine 41 and cysteine 44 form a disulfide bridge. A helical transmembrane segment spans residues 50–65 (ALFGVLGAALIGAIAP). At 66–71 (KTPLRY) the chain is on the cytoplasmic side. A helical membrane pass occupies residues 72–89 (VAMVIWLYSAFRGVQLTY). Residues 90–144 (EHTMLQLYPSPFATCDFMARFPEWLPLDKWVPQVFVASGDCAERQWEFLGLEMPQ) lie on the Periplasmic side of the membrane. Residues cysteine 104 and cysteine 130 are joined by a disulfide bond. The helical transmembrane segment at 145–163 (WLLGIFIAYLIVAVLVVIS) threads the bilayer. Topologically, residues 164 to 176 (QPFKAKKRDLFGR) are cytoplasmic.

Belongs to the DsbB family.

Its subcellular location is the cell inner membrane. In terms of biological role, required for disulfide bond formation in some periplasmic proteins. Acts by oxidizing the DsbA protein. The sequence is that of Disulfide bond formation protein B from Escherichia coli O6:K15:H31 (strain 536 / UPEC).